A 275-amino-acid polypeptide reads, in one-letter code: Large ribosomal subunit protein uL2 (275 aa).

A disordered region spans residues 225-275 (MNPIDHPHGGGEGRTSGGRHPVTPWGKPTKGKKTRSNKKTDRLIMRRRQTQ).

This sequence belongs to the universal ribosomal protein uL2 family. Part of the 50S ribosomal subunit. Forms a bridge to the 30S subunit in the 70S ribosome.

One of the primary rRNA binding proteins. Required for association of the 30S and 50S subunits to form the 70S ribosome, for tRNA binding and peptide bond formation. It has been suggested to have peptidyltransferase activity; this is somewhat controversial. Makes several contacts with the 16S rRNA in the 70S ribosome. This Paramagnetospirillum magneticum (strain ATCC 700264 / AMB-1) (Magnetospirillum magneticum) protein is Large ribosomal subunit protein uL2.